A 435-amino-acid chain; its full sequence is MAAKGAKETLVNKLGFKSSSSSSKSAELEVEKLKRENQQMKKSLEDMKRAGRHQHTHPDTDKARLLERILALETLREKNNQQLLGREQEITTLRQQLRSAHGEVVSSLQSQLENKQHEAEQRERQYQALVKETEDLKNKYCAVSERCDTLEKQKGSSGELAVVQEQLRDALEKNQHWLVYDQQREAYVQGVLARIKDLEAQLNEANQALQQQHKEAKSDDQSAQKVQQELEAERNKVSRMQMEVEDLQVRYEEKSREAAQAREQLLEERRREREDRKSSVERDALLQDQHRKREAELIMQVNLLQKSLMNQKEEQKRMAILEQQIQLSAKESENEKLDRQTLQHQLHKVLKELRKARDQITRLESSKQQRESRFSEPSSYNRMDLERLTIQDHMTSPSKVHNILDESVLECPNCGASYPTSQHRELLAHLDYCFT.

Disordered regions lie at residues 1–63, 213–239, and 268–287; these read MAAK…TDKA, HKEAKSDDQSAQKVQQELEAERNKVSR, and ERRREREDRKSSVERDALLQ. Coiled coils occupy residues 18–140 and 185–373; these read SSSS…KNKY and EAYV…RESR. 2 stretches are compositionally biased toward basic and acidic residues: residues 26-49 and 213-222; these read AELEVEKLKRENQQMKKSLEDMKR and HKEAKSDDQS.

Its subcellular location is the cytoplasm. It localises to the cytoskeleton. The protein localises to the microtubule organizing center. It is found in the centrosome. The protein resides in the centriole. Its subcellular location is the cleavage furrow. It localises to the midbody. The protein localises to the midbody ring. Functionally, plays a role in mitotic exit and cytokinesis. Recruits PDCD6IP and TSG101 to midbody during cytokinesis. Required for successful completion of cytokinesis. Not required for microtubule nucleation. Plays a role in the development of the brain and kidney. The protein is Centrosomal protein of 55 kDa of Danio rerio (Zebrafish).